A 241-amino-acid polypeptide reads, in one-letter code: 1-(5-phosphoribosyl)-5-[(5-phosphoribosylamino)methylideneamino] imidazole-4-carboxamide isomerase (241 aa).

Aspartate 8 serves as the catalytic Proton acceptor. Aspartate 129 serves as the catalytic Proton donor.

It belongs to the HisA/HisF family.

It is found in the cytoplasm. It catalyses the reaction 1-(5-phospho-beta-D-ribosyl)-5-[(5-phospho-beta-D-ribosylamino)methylideneamino]imidazole-4-carboxamide = 5-[(5-phospho-1-deoxy-D-ribulos-1-ylimino)methylamino]-1-(5-phospho-beta-D-ribosyl)imidazole-4-carboxamide. The protein operates within amino-acid biosynthesis; L-histidine biosynthesis; L-histidine from 5-phospho-alpha-D-ribose 1-diphosphate: step 4/9. In Chloroflexus aggregans (strain MD-66 / DSM 9485), this protein is 1-(5-phosphoribosyl)-5-[(5-phosphoribosylamino)methylideneamino] imidazole-4-carboxamide isomerase.